The sequence spans 490 residues: Betaine aldehyde dehydrogenase (490 aa).

N93 contributes to the K(+) binding site. Residue 150–152 participates in NAD(+) binding; the sequence is GAW. Residue K162 is the Charge relay system of the active site. 176–179 provides a ligand contact to NAD(+); sequence KPSE. Residue V180 participates in K(+) binding. 230 to 233 contacts NAD(+); that stretch reads GTAT. Position 246 (L246) interacts with K(+). The Proton acceptor role is filled by E252. Positions 254, 286, and 387 each coordinate NAD(+). The active-site Nucleophile is the C286. Position 286 is a cysteine sulfenic acid (-SOH) (C286). Residues K457 and G460 each contribute to the K(+) site. Residue E464 is the Charge relay system of the active site.

This sequence belongs to the aldehyde dehydrogenase family. In terms of assembly, dimer of dimers. It depends on K(+) as a cofactor.

It carries out the reaction betaine aldehyde + NAD(+) + H2O = glycine betaine + NADH + 2 H(+). It functions in the pathway amine and polyamine biosynthesis; betaine biosynthesis via choline pathway; betaine from betaine aldehyde: step 1/1. Functionally, involved in the biosynthesis of the osmoprotectant glycine betaine. Catalyzes the irreversible oxidation of betaine aldehyde to the corresponding acid. The protein is Betaine aldehyde dehydrogenase of Xanthomonas euvesicatoria pv. vesicatoria (strain 85-10) (Xanthomonas campestris pv. vesicatoria).